Consider the following 383-residue polypeptide: S-adenosylmethionine synthase (383 aa).

ATP is bound at residue histidine 15. Aspartate 17 contacts Mg(2+). Glutamate 43 is a binding site for K(+). The L-methionine site is built by glutamate 56 and glutamine 99. The tract at residues 99 to 109 (QSPDINQGVDR) is flexible loop. ATP-binding positions include 164 to 166 (DAK), 230 to 231 (RF), aspartate 239, 245 to 246 (RK), alanine 262, and lysine 266. Aspartate 239 contributes to the L-methionine binding site. Lysine 270 contributes to the L-methionine binding site.

The protein belongs to the AdoMet synthase family. Homotetramer; dimer of dimers. The cofactor is Mg(2+). It depends on K(+) as a cofactor.

Its subcellular location is the cytoplasm. The catalysed reaction is L-methionine + ATP + H2O = S-adenosyl-L-methionine + phosphate + diphosphate. Its pathway is amino-acid biosynthesis; S-adenosyl-L-methionine biosynthesis; S-adenosyl-L-methionine from L-methionine: step 1/1. Functionally, catalyzes the formation of S-adenosylmethionine (AdoMet) from methionine and ATP. The overall synthetic reaction is composed of two sequential steps, AdoMet formation and the subsequent tripolyphosphate hydrolysis which occurs prior to release of AdoMet from the enzyme. This is S-adenosylmethionine synthase from Shewanella oneidensis (strain ATCC 700550 / JCM 31522 / CIP 106686 / LMG 19005 / NCIMB 14063 / MR-1).